A 75-amino-acid polypeptide reads, in one-letter code: Exodeoxyribonuclease 7 small subunit (75 aa).

It belongs to the XseB family. As to quaternary structure, heterooligomer composed of large and small subunits.

It localises to the cytoplasm. The enzyme catalyses Exonucleolytic cleavage in either 5'- to 3'- or 3'- to 5'-direction to yield nucleoside 5'-phosphates.. Its function is as follows. Bidirectionally degrades single-stranded DNA into large acid-insoluble oligonucleotides, which are then degraded further into small acid-soluble oligonucleotides. This chain is Exodeoxyribonuclease 7 small subunit, found in Pelobacter propionicus (strain DSM 2379 / NBRC 103807 / OttBd1).